We begin with the raw amino-acid sequence, 238 residues long: Large ribosomal subunit protein uL3 (238 aa).

2 disordered regions span residues 140 to 164 and 212 to 238; these read SHRS…KMPG and LPKE…QEGA. Q151 is modified (N5-methylglutamine). Over residues 225 to 238 the composition is skewed to low complexity; sequence AGGEAEAAAQQEGA.

The protein belongs to the universal ribosomal protein uL3 family. In terms of assembly, part of the 50S ribosomal subunit. Forms a cluster with proteins L14 and L19. In terms of processing, methylated by PrmB.

One of the primary rRNA binding proteins, it binds directly near the 3'-end of the 23S rRNA, where it nucleates assembly of the 50S subunit. The sequence is that of Large ribosomal subunit protein uL3 from Bradyrhizobium diazoefficiens (strain JCM 10833 / BCRC 13528 / IAM 13628 / NBRC 14792 / USDA 110).